The following is a 515-amino-acid chain: 2-isopropylmalate synthase (515 aa).

A Pyruvate carboxyltransferase domain is found at 5-267 (VIIFDTTLRD…HTSLKNDEIH (263 aa)). Residues D14, H202, H204, and N238 each coordinate Mn(2+). A regulatory domain region spans residues 392–515 (KLNYLSVQSG…EIKQNKITTV (124 aa)).

The protein belongs to the alpha-IPM synthase/homocitrate synthase family. LeuA type 1 subfamily. As to quaternary structure, homodimer. Requires Mn(2+) as cofactor.

It is found in the cytoplasm. It catalyses the reaction 3-methyl-2-oxobutanoate + acetyl-CoA + H2O = (2S)-2-isopropylmalate + CoA + H(+). It participates in amino-acid biosynthesis; L-leucine biosynthesis; L-leucine from 3-methyl-2-oxobutanoate: step 1/4. In terms of biological role, catalyzes the condensation of the acetyl group of acetyl-CoA with 3-methyl-2-oxobutanoate (2-ketoisovalerate) to form 3-carboxy-3-hydroxy-4-methylpentanoate (2-isopropylmalate). The chain is 2-isopropylmalate synthase from Aliivibrio salmonicida (strain LFI1238) (Vibrio salmonicida (strain LFI1238)).